The chain runs to 426 residues: Serine--tRNA ligase (426 aa).

231–233 (TAE) serves as a coordination point for L-serine. An ATP-binding site is contributed by 262–264 (RAE). Glutamate 285 serves as a coordination point for L-serine. Residue 349 to 352 (EISS) coordinates ATP. Serine 385 lines the L-serine pocket.

Belongs to the class-II aminoacyl-tRNA synthetase family. Type-1 seryl-tRNA synthetase subfamily. In terms of assembly, homodimer. The tRNA molecule binds across the dimer.

Its subcellular location is the cytoplasm. The enzyme catalyses tRNA(Ser) + L-serine + ATP = L-seryl-tRNA(Ser) + AMP + diphosphate + H(+). It carries out the reaction tRNA(Sec) + L-serine + ATP = L-seryl-tRNA(Sec) + AMP + diphosphate + H(+). Its pathway is aminoacyl-tRNA biosynthesis; selenocysteinyl-tRNA(Sec) biosynthesis; L-seryl-tRNA(Sec) from L-serine and tRNA(Sec): step 1/1. In terms of biological role, catalyzes the attachment of serine to tRNA(Ser). Is also able to aminoacylate tRNA(Sec) with serine, to form the misacylated tRNA L-seryl-tRNA(Sec), which will be further converted into selenocysteinyl-tRNA(Sec). This Myxococcus xanthus (strain DK1622) protein is Serine--tRNA ligase.